The chain runs to 96 residues: MSAVVQQQGDLLLNLYIQPKASRDQIVGLHGDELKVAITAPPIDGKANAHLSKYLAKAFKVPKSDVYIIKGELGRHKQIRIVTPKLIPPEVSELLE.

This sequence belongs to the UPF0235 family.

This is UPF0235 protein Sputw3181_1321 from Shewanella sp. (strain W3-18-1).